Here is a 504-residue protein sequence, read N- to C-terminus: Probable alpha-L-arabinofuranosidase C (504 aa).

N-linked (GlcNAc...) asparagine glycans are attached at residues Asn-152, Asn-181, and Asn-269.

It belongs to the glycosyl hydrolase 51 family.

It localises to the secreted. It carries out the reaction Hydrolysis of terminal non-reducing alpha-L-arabinofuranoside residues in alpha-L-arabinosides.. It participates in glycan metabolism; L-arabinan degradation. Alpha-L-arabinofuranosidase involved in the degradation of arabinoxylan, a major component of plant hemicellulose. Acts only on small linear 1,5-alpha-linked L-arabinofuranosyl oligosaccharides. This Aspergillus flavus (strain ATCC 200026 / FGSC A1120 / IAM 13836 / NRRL 3357 / JCM 12722 / SRRC 167) protein is Probable alpha-L-arabinofuranosidase C (abfC).